A 1578-amino-acid polypeptide reads, in one-letter code: FH1/FH2 domain-containing protein 3 (1578 aa).

Residues 18-405 enclose the GBD/FH3 domain; it reads NSTNFPEPSR…DLCEKDEEEE (388 aa). Disordered regions lie at residues 324–518, 535–824, 915–942, 979–1013, 1418–1462, 1490–1514, and 1528–1565; these read HEDG…DKLP, SPLL…GVNG, VGRGAISPDVESQDKVPDTPPAQLKTES, LGHREAPGPPPPPPPTFLGLPPPPPPPLLDSVPPP, QQKQ…YAED, RTRSRASRGSTSSWTMGTEESPSVT, and SATQVPSQRVVPRERKRSRANRKSLRRTLKSGLTPEEA. Phosphoserine is present on residues Ser-345 and Ser-376. Over residues 368 to 383 the composition is skewed to polar residues; that stretch reads IQNIKSPLSAPTSPCS. A compositionally biased stretch (acidic residues) spans 399 to 425; the sequence is EKDEEEEEEEEQPITEPNSEEEREDDA. Thr-413 carries the phosphothreonine modification. Residues 434–446 show a composition bias toward low complexity; it reads ASSASGQSSPGKD. Residues 453–473 are compositionally biased toward polar residues; that stretch reads ALHTTSSPTSQGRWLSASTAA. Residues 553-583 are compositionally biased toward low complexity; the sequence is SNFSSNSFQSSRPSPGPSGSPSYASSFSSPQ. Residues 584–598 show a composition bias toward polar residues; the sequence is DTRSSPSGLLTSSFR. The stretch at 597–645 forms a coiled coil; the sequence is FRQHQESLAAERERRRQEREERLQRIEREERNKFNREYLDKREEQRQAR. A compositionally biased stretch (basic and acidic residues) spans 599–651; the sequence is QHQESLAAERERRRQEREERLQRIEREERNKFNREYLDKREEQRQARGERYKY. Low complexity-rich tracts occupy residues 675 to 684 and 692 to 701; these read DLSLDLSLPA and SSQSPSADSQ. Acidic residues predominate over residues 751–761; it reads SQEEPVLELEP. Residues 762–782 are compositionally biased toward basic and acidic residues; it reads EERASLSEKERQNEEVNERDN. The segment covering 784-793 has biased composition (low complexity); the sequence is SASSISSSSS. Residues 795-809 are compositionally biased toward basic and acidic residues; sequence LEREEKEDKLSEDRA. At Ser-921 the chain carries Phosphoserine. Thr-933 carries the phosphothreonine modification. Residues 985–1013 show a composition bias toward pro residues; it reads PGPPPPPPPTFLGLPPPPPPPLLDSVPPP. The FH1 domain maps to 985 to 1016; sequence PGPPPPPPPTFLGLPPPPPPPLLDSVPPPPVP. The 397-residue stretch at 1039–1435 folds into the FH2 domain; the sequence is GQPAFTKKKK…HRERNKTRGK (397 aa). Over residues 1420-1434 the composition is skewed to basic residues; it reads KQKRANHRERNKTRG. Over residues 1444 to 1456 the composition is skewed to low complexity; it reads SGSSPAAPSQPQG. One can recognise a DAD domain in the interval 1515 to 1547; that stretch reads DDAADEIMDRIVKSATQVPSQRVVPRERKRSRA. Positions 1541–1556 are enriched in basic residues; sequence ERKRSRANRKSLRRTL.

Belongs to the formin homology family. In terms of assembly, interacts with nestin/NES-based interfilament (IF). Interacts with SQSTM1. As to expression, expressed in the heart, including left ventricle, kidney, brain and skeletal muscle, including soleus and tibialis anterior (at protein level).

Its subcellular location is the cytoplasm. It is found in the cytoskeleton. It localises to the myofibril. The protein resides in the sarcomere. The protein localises to the z line. May play a role in actin filament polymerization in cardiomyocytes. Actin-organizing protein that may cause stress fiber formation together with cell elongation. The protein is FH1/FH2 domain-containing protein 3 (Fhod3) of Mus musculus (Mouse).